We begin with the raw amino-acid sequence, 89 residues long: Co-chaperonin GroES (89 aa).

Belongs to the GroES chaperonin family. Heptamer of 7 subunits arranged in a ring. Interacts with the chaperonin GroEL.

It is found in the cytoplasm. Its function is as follows. Together with the chaperonin GroEL, plays an essential role in assisting protein folding. The GroEL-GroES system forms a nano-cage that allows encapsulation of the non-native substrate proteins and provides a physical environment optimized to promote and accelerate protein folding. GroES binds to the apical surface of the GroEL ring, thereby capping the opening of the GroEL channel. The protein is Co-chaperonin GroES of Petrotoga mobilis (strain DSM 10674 / SJ95).